A 338-amino-acid polypeptide reads, in one-letter code: DNA-directed RNA polymerase subunit alpha (338 aa).

The alpha N-terminal domain (alpha-NTD) stretch occupies residues M1 to D234. The alpha C-terminal domain (alpha-CTD) stretch occupies residues F250 to F338.

It belongs to the RNA polymerase alpha chain family. As to quaternary structure, homodimer. The RNAP catalytic core consists of 2 alpha, 1 beta, 1 beta' and 1 omega subunit. When a sigma factor is associated with the core the holoenzyme is formed, which can initiate transcription.

The catalysed reaction is RNA(n) + a ribonucleoside 5'-triphosphate = RNA(n+1) + diphosphate. Its function is as follows. DNA-dependent RNA polymerase catalyzes the transcription of DNA into RNA using the four ribonucleoside triphosphates as substrates. This chain is DNA-directed RNA polymerase subunit alpha, found in Jannaschia sp. (strain CCS1).